We begin with the raw amino-acid sequence, 299 residues long: Probable transport accessory protein MmpS3 (299 aa).

Positions methionine 1–proline 72 are disordered. A helical transmembrane segment spans residues valine 101 to valine 121. Residues lysine 128–proline 139 show a composition bias toward polar residues. The interval lysine 128 to glutamine 213 is disordered. Positions proline 150–threonine 163 are enriched in pro residues. Over residues glutamate 164–valine 176 the composition is skewed to low complexity. A compositionally biased stretch (pro residues) spans threonine 177–alanine 193.

Belongs to the MmpS family.

It localises to the cell membrane. In Mycobacterium tuberculosis (strain CDC 1551 / Oshkosh), this protein is Probable transport accessory protein MmpS3 (mmpS3).